Reading from the N-terminus, the 386-residue chain is Porin PorA (386 aa).

The signal sequence occupies residues 1–35; sequence MKRTLGHALIIIGAALIVIAVLLPTFLVPRLRVIP. A compositionally biased stretch (polar residues) spans 53-63; that stretch reads DSSQLGKNEPT. The tract at residues 53-78 is disordered; the sequence is DSSQLGKNEPTPNRKNDPRCKAETDE. Residues 64–78 show a composition bias toward basic and acidic residues; the sequence is PNRKNDPRCKAETDE.

This sequence belongs to the PorA family.

Its subcellular location is the secreted. The protein localises to the cell wall. Its function is as follows. Forms water-filled channels that favor the permeation of cations. In Corynebacterium amycolatum, this protein is Porin PorA.